Here is a 757-residue protein sequence, read N- to C-terminus: MDYLESLDFPKVVEIVKKYALSDLGRKHLDTLKPTVNPWDELELVEELLNYFARWGEPPIKGLNDISQEVERVKSGSALEPWELLRVSVFLEGCDILKKDFEKREYSRLKETFSRLSSFRDFVEEVNRCIEQDGEISDRASPRLREIRTEKKRLSSEIKRKADDFVRTHSQILQEQMYVYRDGRYLFPVKASMRNAVRGIVHHLSSSGATVFLEPDEFVELNNRVRLLEEEERLEISRILRQLTNILLSRLNDLERNVELIARFDSLYARVKFAREFNGTVVKPSSRIRLVNARHPLIPKERVVPINLELPPNKRGFIITGPNMGGKTVTVKTVGLFTALMMSGFPLPCDEGTELKVFPKIMADIGEEQSIEQSLSTFSSHMKKIVEIVKNADSDSLVILDELGSGTDPVEGAALAVAIIEDLLEKGATIFVTTHLTPVKVFAMNHPLLLNASMEFDPETLSPTYRVLVGVPGGSHAFQIAEKLGLDKRIIENARSRLSREEMELEGLIRSLHEKISLLEEEKRKLQKEREEYMKLREKYEEDYKKLRRMKIEEFDKELRELNDYIRKVKKELDQAIHVAKTGSVDEMREAVKTIEKEKKDLEQKRIEEATEEEIKPGDHVKMEGGTSVGKVVEVKSGTALVDFGFLRLKVPVSKLKKAKKEEKEESSAVSYRPSSFRTEIDIRGMTVEEAEPVVKKFIDDLMMNGISKGYIIHGKGTGKLASGVWEILRKDKRVVSFRFGTPSEGGTGVTVVEVKV.

Residue 321-328 participates in ATP binding; that stretch reads GPNMGGKT. One can recognise a Smr domain in the interval 681–756; it reads IDIRGMTVEE…GTGVTVVEVK (76 aa).

This sequence belongs to the DNA mismatch repair MutS family. MutS2 subfamily. Homodimer. Binds to stalled ribosomes, contacting rRNA.

Its function is as follows. Endonuclease that is involved in the suppression of homologous recombination and thus may have a key role in the control of bacterial genetic diversity. Functionally, acts as a ribosome collision sensor, splitting the ribosome into its 2 subunits. Detects stalled/collided 70S ribosomes which it binds and splits by an ATP-hydrolysis driven conformational change. Acts upstream of the ribosome quality control system (RQC), a ribosome-associated complex that mediates the extraction of incompletely synthesized nascent chains from stalled ribosomes and their subsequent degradation. Probably generates substrates for RQC. The sequence is that of Endonuclease MutS2 from Thermotoga petrophila (strain ATCC BAA-488 / DSM 13995 / JCM 10881 / RKU-1).